The chain runs to 231 residues: uncharacterized protein (231 aa).

6 helical membrane-spanning segments follow: residues 4–24, 29–49, 58–78, 95–115, 147–167, and 211–231; these read YIIY…LQIS, SMIF…LVIG, AGNA…ALPL, TVVI…LLLG, VTAV…YLVL, and LCGI…YFFV.

Belongs to the YohK (E.coli)/YwbG (IPA-22R) (B.subtilis) family.

The protein localises to the cell membrane. This is an uncharacterized protein from Haemophilus influenzae (strain ATCC 51907 / DSM 11121 / KW20 / Rd).